The primary structure comprises 357 residues: Gene 58 protein (357 aa).

The protein belongs to the herpesviridae BMRF2 family.

The polypeptide is Gene 58 protein (58) (Saimiri sciureus (Common squirrel monkey)).